We begin with the raw amino-acid sequence, 210 residues long: Thioredoxin-like 3-1, chloroplastic (210 aa).

The Thioredoxin domain maps to 81–210 (WRLKAFWSNI…EVRELINKFV (130 aa)). Residues cysteine 130 and cysteine 133 each act as nucleophile in the active site. Residues cysteine 130 and cysteine 133 are joined by a disulfide bond.

This sequence belongs to the thioredoxin family.

It is found in the plastid. Its subcellular location is the chloroplast stroma. Probable thiol-disulfide oxidoreductase that may participate in various redox reactions. In Arabidopsis thaliana (Mouse-ear cress), this protein is Thioredoxin-like 3-1, chloroplastic (WCRKC1).